The chain runs to 132 residues: Agouti-signaling protein (132 aa).

The signal sequence occupies residues 1 to 22 (MDVTRLLLATLLVFLCFFTADS). N-linked (GlcNAc...) asparagine glycosylation is present at Asn39. Residues 62-85 (ISRKEAEKKRSSKKEASMKTVARP) are disordered. Over residues 63-78 (SRKEAEKKRSSKKEAS) the composition is skewed to basic and acidic residues. Disulfide bonds link Cys93–Cys108, Cys100–Cys114, Cys107–Cys125, Cys111–Cys132, and Cys116–Cys123. The Agouti domain occupies 93-132 (CVATRNSCKPPAPACCDPCASCQCRFFRSACSCRVLSLNC).

The protein localises to the secreted. Its function is as follows. Involved in the regulation of melanogenesis. The binding of ASP to MC1R precludes alpha-MSH initiated signaling and thus blocks production of cAMP, leading to a down-regulation of eumelanogenesis (brown/black pigment) and thus increasing synthesis of pheomelanin (yellow/red pigment). The protein is Agouti-signaling protein (ASIP) of Pongo pygmaeus (Bornean orangutan).